We begin with the raw amino-acid sequence, 634 residues long: Formate--tetrahydrofolate ligase (634 aa).

78 to 85 (TPLGEGKS) serves as a coordination point for ATP.

It belongs to the formate--tetrahydrofolate ligase family. Homodimer.

The catalysed reaction is (6S)-5,6,7,8-tetrahydrofolate + formate + ATP = (6R)-10-formyltetrahydrofolate + ADP + phosphate. The protein operates within one-carbon metabolism; tetrahydrofolate interconversion. In Arabidopsis thaliana (Mouse-ear cress), this protein is Formate--tetrahydrofolate ligase (THFS).